Here is a 672-residue protein sequence, read N- to C-terminus: tRNA(Met) cytidine acetyltransferase TmcA (672 aa).

ATP-binding positions include glutamine 180, 202–211, and arginine 319; that span reads GRGKSALAGQ. Residues 349–531 enclose the N-acetyltransferase domain; sequence IEISAFYQQA…SGCYTAMALL (183 aa). Acetyl-CoA is bound by residues 461–463, 468–474, and arginine 506; these read IAV and QREGIGQ.

Belongs to the RNA cytidine acetyltransferase family. TmcA subfamily.

Its subcellular location is the cytoplasm. The catalysed reaction is cytidine(34) in elongator tRNA(Met) + acetyl-CoA + ATP + H2O = N(4)-acetylcytidine(34) in elongator tRNA(Met) + ADP + phosphate + CoA + H(+). Functionally, catalyzes the formation of N(4)-acetylcytidine (ac(4)C) at the wobble position of tRNA(Met), by using acetyl-CoA as an acetyl donor and ATP (or GTP). The sequence is that of tRNA(Met) cytidine acetyltransferase TmcA from Salmonella typhimurium (strain LT2 / SGSC1412 / ATCC 700720).